The primary structure comprises 43 residues: Protein PsbN (43 aa).

The chain crosses the membrane as a helical span at residues 7 to 27; that stretch reads LSIAIGSILLVITGFAIYTAF.

It belongs to the PsbN family.

It is found in the cellular thylakoid membrane. Functionally, may play a role in photosystem I and II biogenesis. The chain is Protein PsbN from Crocosphaera subtropica (strain ATCC 51142 / BH68) (Cyanothece sp. (strain ATCC 51142)).